Reading from the N-terminus, the 164-residue chain is Large ribosomal subunit protein uL10 (164 aa).

Belongs to the universal ribosomal protein uL10 family. As to quaternary structure, part of the ribosomal stalk of the 50S ribosomal subunit. The N-terminus interacts with L11 and the large rRNA to form the base of the stalk. The C-terminus forms an elongated spine to which L12 dimers bind in a sequential fashion forming a multimeric L10(L12)X complex.

Forms part of the ribosomal stalk, playing a central role in the interaction of the ribosome with GTP-bound translation factors. This is Large ribosomal subunit protein uL10 from Helicobacter pylori (strain G27).